The primary structure comprises 803 residues: MTCQLQAQPLIPYNVLAGVPTSNTGSPIGNAGNQFDQFEQTVKELKEAWEAFQKNGSFSLAALEKGFDAAIGGGSFDYLGLVQAGLGLVGTLGAAIPGVSVAVPLISMLVGVFWPKGTNNQENLITVIDKEVQRILDEKLSDQLIKKLNADLNAFTDLVTRLEEVIIDATFENHKPVLQVSKSNYMKVDSAYFSTGGILTLGMSDFLTDTYSKLTFPLYVLGATMKLSAYHSYIQFGNTWLNKVYDLSSDEGKTMSQALARAKQHMRQDIAFYTSQALNMFTGNLPSLSSNKYAINDYNVYTRAMVLNGLDIVATWPTLYPDDYSSQIKLEKTRVIFSDMVGQSESRDGSVTIKNIFDNTDSHQHGSIGLNSISYFPDELQKAQLRMYDYNHKPYCTDCFCWPYGVILNYNKNTFRYGDNDPGLSGDVQLPAPMSVVNAQTQTAQYTDGENIWTDTGRSWLCTLRGYCTTNCFPGRGCYNNSTGYGESCNQSLPGQKIHALYPFTQTNVLGQSGKLGLLASHIPYDLSPNNTIGDKDTDSTNIVAKGIPVEKGYASSGQKVEIIREWINGANVVQLSPGQSWGMDFTNSTGGQYMVRCRYASTNDTPIFFNLVYDGGSNPIYNQMTFPATKETPAHDSVDNKILGIKGINGNYSLMNVKDSVELPSGKFHVFFTNNGSSAIYLDRLEFVPLDQPAAPTQSTQPINYPITSRLPHRSGEPPAIIWEKSGNVRGNQLTISAQGVPENSQIYLSVGGDRQILDRSNGFKLVNYSPTYSFTNIQASSSNLVDITSGTITGQVQVSNL.

The protein belongs to the delta endotoxin family.

Endotoxin with nematicidal activity. This chain is Pesticidal crystal protein Cry13Aa (cry13Aa), found in Bacillus thuringiensis.